A 743-amino-acid polypeptide reads, in one-letter code: Ovocleidin-116 (743 aa).

A signal peptide spans Met-1–Pro-18. An intrachain disulfide couples Cys-31 to Cys-42. Asn-62 carries N-linked (GlcNAc...) asparagine glycosylation. The disordered stretch occupies residues Lys-68–Ile-225. Positions Asp-129–Glu-141 are enriched in polar residues. Residues Gly-169–Gly-179 are compositionally biased toward gly residues. Asn-293 carries N-linked (GlcNAc...) asparagine; partial glycosylation. Disordered regions lie at residues Gly-333–Ile-356, Ser-385–Arg-454, Ala-505–Val-534, Arg-549–Gly-577, Asp-628–Gly-649, and Ser-692–Leu-743. Low complexity predominate over residues Ala-402–Gly-420. Residues Asp-421–Arg-431 are compositionally biased toward polar residues. Residues Arg-549–Ser-558 are compositionally biased toward basic and acidic residues.

This sequence belongs to the osteoregulin family. Asn-62 is fully glycosylated, whereas only less than 10% of Asn-293 seem to be glycosylated. As to expression, in the eggshell, expressed mainly in the palisade and mammillary layers. Expression also detected in the hypertrophic zone of the epiphyseal growth plate, and in cortical and medullary bone (at protein level). Highly expressed in uterus. Not detected in the proximal oviduct, liver, magnum, duodenum and kidney.

The protein localises to the secreted. It is found in the extracellular space. It localises to the extracellular matrix. Functionally, major component of the eggshell matrix. May play an important role in the regulation of calcite growth during eggshell calcification. May also regulate the mineralization process in developing and growing bones. This chain is Ovocleidin-116, found in Gallus gallus (Chicken).